The following is a 376-amino-acid chain: N-acetyldiaminopimelate deacetylase (376 aa).

Asp69 is an active-site residue. Glu128 functions as the Proton acceptor in the catalytic mechanism.

It belongs to the peptidase M20A family. N-acetyldiaminopimelate deacetylase subfamily.

The enzyme catalyses N-acetyl-(2S,6S)-2,6-diaminopimelate + H2O = (2S,6S)-2,6-diaminopimelate + acetate. It participates in amino-acid biosynthesis; L-lysine biosynthesis via DAP pathway; LL-2,6-diaminopimelate from (S)-tetrahydrodipicolinate (acetylase route): step 3/3. Catalyzes the conversion of N-acetyl-diaminopimelate to diaminopimelate and acetate. The sequence is that of N-acetyldiaminopimelate deacetylase from Streptococcus pneumoniae serotype 19F (strain G54).